The primary structure comprises 81 residues: Cytotoxin 1a (81 aa).

Residues 1 to 21 (MKTLLLTLVVVTIVCLDLGYT) form the signal peptide. Disulfide bonds link cysteine 24-cysteine 42, cysteine 35-cysteine 59, cysteine 63-cysteine 74, and cysteine 75-cysteine 80.

It belongs to the three-finger toxin family. Short-chain subfamily. Type IA cytotoxin sub-subfamily. Monomer in solution; Homodimer and oligomer in the presence of negatively charged lipids forming a pore with a size ranging between 20 and 30 Angstroms. As to expression, expressed by the venom gland.

It is found in the secreted. Its subcellular location is the target cell membrane. Shows cytolytic activity on many different cells by forming pore in lipid membranes. In vivo, increases heart rate or kills the animal by cardiac arrest. In addition, it binds to heparin with high affinity, interacts with Kv channel-interacting protein 1 (KCNIP1) in a calcium-independent manner, and binds to integrin alpha-V/beta-3 (ITGAV/ITGB3) with moderate affinity. In Naja atra (Chinese cobra), this protein is Cytotoxin 1a.